The primary structure comprises 101 residues: NADH-quinone oxidoreductase subunit K (101 aa).

3 helical membrane-spanning segments follow: residues 4–24, 30–50, and 62–82; these read LGHLLVLGAALFCISLAGIFL, IVLLMSIELMLLAVNVNFIAF, and FVFFILTVAAAEAAIGLAILV.

It belongs to the complex I subunit 4L family. In terms of assembly, NDH-1 is composed of 14 different subunits. Subunits NuoA, H, J, K, L, M, N constitute the membrane sector of the complex.

It localises to the cell inner membrane. It catalyses the reaction a quinone + NADH + 5 H(+)(in) = a quinol + NAD(+) + 4 H(+)(out). Functionally, NDH-1 shuttles electrons from NADH, via FMN and iron-sulfur (Fe-S) centers, to quinones in the respiratory chain. The immediate electron acceptor for the enzyme in this species is believed to be ubiquinone. Couples the redox reaction to proton translocation (for every two electrons transferred, four hydrogen ions are translocated across the cytoplasmic membrane), and thus conserves the redox energy in a proton gradient. The sequence is that of NADH-quinone oxidoreductase subunit K from Xylella fastidiosa (strain 9a5c).